Reading from the N-terminus, the 153-residue chain is Large ribosomal subunit protein eL15 (153 aa).

Lys32 is covalently cross-linked (Glycyl lysine isopeptide (Lys-Gly) (interchain with G-Cter in SUMO2)). 2 positions are modified to phosphoserine: Ser46 and Ser49. Residues 114–135 (TSAGRKSRGLGKGHKFHHTIGG) form a disordered region. The segment covering 118 to 131 (RKSRGLGKGHKFHH) has biased composition (basic residues).

Belongs to the eukaryotic ribosomal protein eL15 family. As to quaternary structure, component of the large ribosomal subunit. Interacts with IFIT1 (via TPR repeats 1-4).

It localises to the cytoplasm. In terms of biological role, component of the large ribosomal subunit. The ribosome is a large ribonucleoprotein complex responsible for the synthesis of proteins in the cell. The polypeptide is Large ribosomal subunit protein eL15 (RPL15) (Sus scrofa (Pig)).